Consider the following 371-residue polypeptide: 4-hydroxy-3-methylbut-2-en-1-yl diphosphate synthase (flavodoxin) (371 aa).

4 residues coordinate [4Fe-4S] cluster: Cys-270, Cys-273, Cys-305, and Glu-312.

Belongs to the IspG family. [4Fe-4S] cluster serves as cofactor.

The enzyme catalyses (2E)-4-hydroxy-3-methylbut-2-enyl diphosphate + oxidized [flavodoxin] + H2O + 2 H(+) = 2-C-methyl-D-erythritol 2,4-cyclic diphosphate + reduced [flavodoxin]. It functions in the pathway isoprenoid biosynthesis; isopentenyl diphosphate biosynthesis via DXP pathway; isopentenyl diphosphate from 1-deoxy-D-xylulose 5-phosphate: step 5/6. Converts 2C-methyl-D-erythritol 2,4-cyclodiphosphate (ME-2,4cPP) into 1-hydroxy-2-methyl-2-(E)-butenyl 4-diphosphate. This is 4-hydroxy-3-methylbut-2-en-1-yl diphosphate synthase (flavodoxin) from Shewanella denitrificans (strain OS217 / ATCC BAA-1090 / DSM 15013).